A 125-amino-acid chain; its full sequence is uncharacterized protein (125 aa).

The next 4 helical transmembrane spans lie at 9–29 (IANA…TLTG), 33–53 (GEKT…NMVV), 56–76 (IVQV…TLVV), and 100–120 (FWTA…LNAF).

It localises to the cell membrane. This is an uncharacterized protein from Streptomyces coelicolor (strain ATCC BAA-471 / A3(2) / M145).